A 64-amino-acid polypeptide reads, in one-letter code: Large ribosomal subunit protein bL35 (64 aa).

The segment covering 1-26 (MPKMKTKSAAAKRFKTTKSGKIKRKQ) has biased composition (basic residues). The segment at 1–46 (MPKMKTKSAAAKRFKTTKSGKIKRKQAYTSHLAPNKTTKQKRHLRK) is disordered.

This sequence belongs to the bacterial ribosomal protein bL35 family.

This chain is Large ribosomal subunit protein bL35, found in Mycoplasmoides gallisepticum (strain R(low / passage 15 / clone 2)) (Mycoplasma gallisepticum).